We begin with the raw amino-acid sequence, 141 residues long: ATP synthase epsilon chain (141 aa).

Belongs to the ATPase epsilon chain family. As to quaternary structure, F-type ATPases have 2 components, CF(1) - the catalytic core - and CF(0) - the membrane proton channel. CF(1) has five subunits: alpha(3), beta(3), gamma(1), delta(1), epsilon(1). CF(0) has three main subunits: a, b and c.

The protein resides in the cell inner membrane. Functionally, produces ATP from ADP in the presence of a proton gradient across the membrane. This is ATP synthase epsilon chain from Methylobacillus flagellatus (strain ATCC 51484 / DSM 6875 / VKM B-1610 / KT).